The sequence spans 610 residues: MIFTSTPPAPPPADAQQRQPRYPGEDTTPTSRREIWGWYTYGIAAEVFAVCGVGSFLPLTLEQLARERGTLLSSHLPCVGPGSPSAAPGNGTTPAMLRRDGLGSDQCVVGLFGLQINTASFAMYTFSLAVLVQALTLISFSALADYEKNRKTLLLTFGLIGSVSSMLFVFISPRLYILGAILVVIGVTCLGSSFVVLNSFLPVLVANDPSIQTARKTEGEELPHLDSSGEYTRSGSFNRGDNRGFDDYVAPEHGLKPKTTDSTSPEMQLSTKISSKGVGLGYCAAVLVQVLSILLLFTLSKTSLPKISGTLPLRFVLLLVGIWWFSFTVVTRRWLRNRPGPPLDTSKGGARWRIWLRLVGFAWKSLWKTVKVAAKLREVVIFLIAWFLLSDAMATVSGTAILFARTELKMSTTAVGLLSITATLSGMTGAFLWPVVSRRLKLKSNHTIMLCIALFEIIPLYGMLAYIPLVKKWGVIGLQQPWEIFPLGIVHGLVSGGLSSYCRSFFGVLIPPGSEAAFYALYAATDKGSSFIGPAVVGVLIDATGQVRSGFFFIAVLIVLPIPLIWMVNAEKGRQEGLAMAEMLEKSHGENSSEFGHPSEEAEGLLARNP.

A disordered region spans residues 1–29 (MIFTSTPPAPPPADAQQRQPRYPGEDTTP). Residues 41–61 (YGIAAEVFAVCGVGSFLPLTL) traverse the membrane as a helical segment. N-linked (GlcNAc...) asparagine glycosylation occurs at N90. Transmembrane regions (helical) follow at residues 120 to 140 (SFAM…LISF), 153 to 173 (LLLT…FISP), and 177 to 197 (ILGA…FVVL). Residues 216–242 (KTEGEELPHLDSSGEYTRSGSFNRGDN) are disordered. Polar residues predominate over residues 229–239 (GEYTRSGSFNR). 4 helical membrane passes run 277 to 297 (GVGL…LLLF), 310 to 330 (TLPL…FTVV), 379 to 399 (VVIF…VSGT), and 415 to 435 (VGLL…LWPV). N-linked (GlcNAc...) asparagine glycosylation is present at N445. 4 helical membrane passes run 450–470 (LCIA…IPLV), 485–507 (FPLG…SFFG), 527–547 (KGSS…TGQV), and 550–570 (GFFF…MVNA). The disordered stretch occupies residues 586 to 610 (KSHGENSSEFGHPSEEAEGLLARNP). N591 carries an N-linked (GlcNAc...) asparagine glycan.

The protein belongs to the ATG22 family.

Its subcellular location is the vacuole membrane. Vacuolar effluxer which mediate the efflux of amino acids resulting from autophagic degradation. The release of autophagic amino acids allows the maintenance of protein synthesis and viability during nitrogen starvation. This chain is Autophagy-related protein 22-1 (atg22-1), found in Aspergillus clavatus (strain ATCC 1007 / CBS 513.65 / DSM 816 / NCTC 3887 / NRRL 1 / QM 1276 / 107).